Consider the following 89-residue polypeptide: Small ribosomal subunit protein bS20 (89 aa).

It belongs to the bacterial ribosomal protein bS20 family.

Its function is as follows. Binds directly to 16S ribosomal RNA. The sequence is that of Small ribosomal subunit protein bS20 from Solidesulfovibrio magneticus (strain ATCC 700980 / DSM 13731 / RS-1) (Desulfovibrio magneticus).